The primary structure comprises 205 residues: Methylthioribulose-1-phosphate dehydratase (205 aa).

Residues His-96 and His-98 each contribute to the Zn(2+) site.

The protein belongs to the aldolase class II family. MtnB subfamily. It depends on Zn(2+) as a cofactor.

The enzyme catalyses 5-(methylsulfanyl)-D-ribulose 1-phosphate = 5-methylsulfanyl-2,3-dioxopentyl phosphate + H2O. Its pathway is amino-acid biosynthesis; L-methionine biosynthesis via salvage pathway; L-methionine from S-methyl-5-thio-alpha-D-ribose 1-phosphate: step 2/6. In terms of biological role, catalyzes the dehydration of methylthioribulose-1-phosphate (MTRu-1-P) into 2,3-diketo-5-methylthiopentyl-1-phosphate (DK-MTP-1-P). This chain is Methylthioribulose-1-phosphate dehydratase, found in Pseudomonas aeruginosa (strain UCBPP-PA14).